Consider the following 103-residue polypeptide: Large ribosomal subunit protein uL24 (103 aa).

The protein belongs to the universal ribosomal protein uL24 family. As to quaternary structure, part of the 50S ribosomal subunit.

Functionally, one of two assembly initiator proteins, it binds directly to the 5'-end of the 23S rRNA, where it nucleates assembly of the 50S subunit. One of the proteins that surrounds the polypeptide exit tunnel on the outside of the subunit. This chain is Large ribosomal subunit protein uL24, found in Sinorhizobium fredii (strain NBRC 101917 / NGR234).